Reading from the N-terminus, the 132-residue chain is Antileukoproteinase (132 aa).

An N-terminal signal peptide occupies residues 1–25; sequence MKSSGLFPFLVLLALGTLAPWAVEG. WAP domains lie at 28 to 76 and 82 to 130; these read KSFK…LDPV and TRRK…VSPV. 8 disulfides stabilise this stretch: cysteine 35/cysteine 64, cysteine 43/cysteine 68, cysteine 51/cysteine 63, cysteine 57/cysteine 72, cysteine 89/cysteine 118, cysteine 96/cysteine 122, cysteine 105/cysteine 117, and cysteine 111/cysteine 126. An elastase inhibitory domain region spans residues 84 to 132; sequence RKPGKCPVTYGQCLMLNPPNFCEMDGQCKRDLKCCMGMCGKSCVSPVKA.

In terms of assembly, interacts with GRN; interaction protects progranulin from proteolysis. As to expression, detected in blood plasma. Detected in bone marrow myeloid cells. Detected in airway sputum. Detected in parotid gland secretions. Detected in seminal plasma (at protein level). Detected in uterus cervix.

It localises to the secreted. In terms of biological role, acid-stable proteinase inhibitor with strong affinities for trypsin, chymotrypsin, elastase, and cathepsin G. Modulates the inflammatory and immune responses after bacterial infection, and after infection by the intracellular parasite L.major. Down-regulates responses to bacterial lipopolysaccharide (LPS). Plays a role in regulating the activation of NF-kappa-B and inflammatory responses. Has antimicrobial activity against mycobacteria, but not against salmonella. Contributes to normal resistance against infection by M.tuberculosis. Required for normal resistance to infection by L.major. Required for normal wound healing, probably by preventing tissue damage by limiting protease activity. Together with ELANE, required for normal differentiation and proliferation of bone marrow myeloid cells. In Homo sapiens (Human), this protein is Antileukoproteinase (SLPI).